The chain runs to 172 residues: S-ribosylhomocysteine lyase (172 aa).

Fe cation is bound by residues H54, H58, and C128.

Belongs to the LuxS family. Homodimer. Fe cation serves as cofactor.

The enzyme catalyses S-(5-deoxy-D-ribos-5-yl)-L-homocysteine = (S)-4,5-dihydroxypentane-2,3-dione + L-homocysteine. Its function is as follows. Involved in the synthesis of autoinducer 2 (AI-2) which is secreted by bacteria and is used to communicate both the cell density and the metabolic potential of the environment. The regulation of gene expression in response to changes in cell density is called quorum sensing. Catalyzes the transformation of S-ribosylhomocysteine (RHC) to homocysteine (HC) and 4,5-dihydroxy-2,3-pentadione (DPD). The polypeptide is S-ribosylhomocysteine lyase (Vibrio vulnificus (strain CMCP6)).